A 168-amino-acid polypeptide reads, in one-letter code: CS3 fimbrial subunit A (168 aa).

An N-terminal signal peptide occupies residues 1–22 (MLKIKYLLIGLSLSAMSSYSLA).

Post-translationally, a longer minor form, starting at amino acid 15, has been detected by amino acid sequencing. This is probably due to alternative processing of the signal peptide.

It is found in the fimbrium. Functionally, fimbriae (also called pili), polar filaments radiating from the surface of the bacterium to a length of 0.5-1.5 micrometers and numbering 100-300 per cell, enable bacteria to colonize the epithelium of specific host organs. The polypeptide is CS3 fimbrial subunit A (Escherichia coli).